Reading from the N-terminus, the 334-residue chain is Protein translocase subunit SecF (334 aa).

6 helical membrane-spanning segments follow: residues 18 to 38 (VAAGLTLAFIAAGFVSFAVTG), 144 to 164 (GAAMAMLIASIFTLIYLAIRF), 168 to 190 (FGLAAVLSTTHDILITLAFIKIF), 195 to 217 (SLTVVAAILTLVGYSANDTIIIF), 258 to 278 (ATLALLLLAGEVIRPFAWVMA), and 279 to 299 (FGVVMATFSSIYVAGPLLLWI).

The protein belongs to the SecD/SecF family. SecF subfamily. In terms of assembly, forms a complex with SecD. Part of the essential Sec protein translocation apparatus which comprises SecA, SecYEG and auxiliary proteins SecDF. Other proteins may also be involved.

It is found in the cell inner membrane. Functionally, part of the Sec protein translocase complex. Interacts with the SecYEG preprotein conducting channel. SecDF uses the proton motive force (PMF) to complete protein translocation after the ATP-dependent function of SecA. This is Protein translocase subunit SecF from Gemmatimonas aurantiaca (strain DSM 14586 / JCM 11422 / NBRC 100505 / T-27).